The following is a 126-amino-acid chain: MNSLFPVMVGGAVGAGARHLVGQAMLARFGPGFPWWTLSVNIVGSLAMGLLIGLLARSGTGGETTRLFVGVGMLGGFTTFSSFSMEFWLLFERGQSVQAGLYVVASVVGALLACGAGMILIRQLPA.

3 consecutive transmembrane segments (helical) span residues 35–55 (WWTLSVNIVGSLAMGLLIGLL), 71–91 (VGMLGGFTTFSSFSMEFWLLF), and 101–121 (LYVVASVVGALLACGAGMILI). The Na(+) site is built by glycine 75 and threonine 78.

The protein belongs to the fluoride channel Fluc/FEX (TC 1.A.43) family.

It is found in the cell inner membrane. It carries out the reaction fluoride(in) = fluoride(out). Na(+) is not transported, but it plays an essential structural role and its presence is essential for fluoride channel function. Functionally, fluoride-specific ion channel. Important for reducing fluoride concentration in the cell, thus reducing its toxicity. This Sphingopyxis alaskensis (strain DSM 13593 / LMG 18877 / RB2256) (Sphingomonas alaskensis) protein is Fluoride-specific ion channel FluC.